We begin with the raw amino-acid sequence, 128 residues long: Ribonuclease P protein component (128 aa).

The protein belongs to the RnpA family. As to quaternary structure, consists of a catalytic RNA component (M1 or rnpB) and a protein subunit.

The catalysed reaction is Endonucleolytic cleavage of RNA, removing 5'-extranucleotides from tRNA precursor.. Its function is as follows. RNaseP catalyzes the removal of the 5'-leader sequence from pre-tRNA to produce the mature 5'-terminus. It can also cleave other RNA substrates such as 4.5S RNA. The protein component plays an auxiliary but essential role in vivo by binding to the 5'-leader sequence and broadening the substrate specificity of the ribozyme. The polypeptide is Ribonuclease P protein component (Prochlorococcus marinus (strain MIT 9301)).